Consider the following 300-residue polypeptide: Protease HtpX homolog (300 aa).

Transmembrane regions (helical) follow at residues 5–25 (IFLL…FISL) and 41–61 (TLFL…LAIS). His-146 contacts Zn(2+). Residue Glu-147 is part of the active site. His-150 contacts Zn(2+). 2 consecutive transmembrane segments (helical) span residues 161 to 181 (LLQG…GFFV) and 196 to 216 (IGFY…ASII). Position 225 (Glu-225) interacts with Zn(2+).

Belongs to the peptidase M48B family. Zn(2+) serves as cofactor.

The protein localises to the cell inner membrane. The chain is Protease HtpX homolog from Methylacidiphilum infernorum (isolate V4) (Methylokorus infernorum (strain V4)).